The chain runs to 254 residues: Phosphorelay intermediate protein rdeA (254 aa).

The 98-residue stretch at 26-123 folds into the HPt domain; sequence EKEFTFELLD…KILSDFKKNW (98 aa). Residue His-65 is modified to Phosphohistidine. A disordered region spans residues 124–254; the sequence is DKNHGEGGSD…SNSPTKIQTK (131 aa). Residues 131 to 143 show a composition bias toward acidic residues; that stretch reads GSDDGGDDNESEP. Residues 146 to 160 are compositionally biased toward low complexity; the sequence is NNNNDGSSVNNNDSS. A compositionally biased stretch (basic and acidic residues) spans 166-186; it reads KDIENKNTDENTGKNLNERSK. The span at 220–238 shows a compositional bias: low complexity; the sequence is NNTNSSSNNNSKNENGLNS. The span at 239–254 shows a compositional bias: polar residues; that stretch reads KQPQTSSNSPTKIQTK.

Post-translationally, the phosphorelay mechanism involves the sequential transfer of a phosphate group from 'Asp-212' of pde2 to His-65 of rdeA. In vitro, dephosphorylated by dokA.

Its subcellular location is the cytoplasm. Functionally, phosphorelay protein that supplies phosphate to regA or accepts phosphate from regA; depending on the relative concentration of the phosphodonor proteins. In vitro, acts as a substrate for cheA (bacterial kinase). Plays a role in the development. ypd1 (yeast) can complement rdeA defect. The sequence is that of Phosphorelay intermediate protein rdeA (rdeA) from Dictyostelium discoideum (Social amoeba).